The sequence spans 202 residues: Regulator of G-protein signaling 16 (202 aa).

S-palmitoyl cysteine attachment occurs at residues cysteine 2 and cysteine 12. One can recognise an RGS domain in the interval 65–181 (SFDLLLSSKN…LKSPAYRDLA (117 aa)). At tyrosine 168 the chain carries Phosphotyrosine; by EGFR. The residue at position 177 (tyrosine 177) is a Phosphotyrosine.

Interacts with GNAI1 and GNAQ. Interacts with GNAI2, GNAI3 and GNAO1. Post-translationally, palmitoylated on Cys-2 and/or Cys-12. Phosphorylated. Phosphorylation at Tyr-168 by EGFR enhances GTPase accelerating (GAP) activity toward GNAI1. In terms of tissue distribution, abundantly expressed in retina with lower levels of expression in most other tissues.

It is found in the membrane. Regulates G protein-coupled receptor signaling cascades. Inhibits signal transduction by increasing the GTPase activity of G protein alpha subunits, thereby driving them into their inactive GDP-bound form. Plays an important role in the phototransduction cascade by regulating the lifetime and effective concentration of activated transducin alpha. May regulate extra and intracellular mitogenic signals. In Homo sapiens (Human), this protein is Regulator of G-protein signaling 16 (RGS16).